The following is an 89-amino-acid chain: Small ribosomal subunit protein uS15 (89 aa).

It belongs to the universal ribosomal protein uS15 family. In terms of assembly, part of the 30S ribosomal subunit. Forms a bridge to the 50S subunit in the 70S ribosome, contacting the 23S rRNA.

One of the primary rRNA binding proteins, it binds directly to 16S rRNA where it helps nucleate assembly of the platform of the 30S subunit by binding and bridging several RNA helices of the 16S rRNA. Functionally, forms an intersubunit bridge (bridge B4) with the 23S rRNA of the 50S subunit in the ribosome. In Enterobacter sp. (strain 638), this protein is Small ribosomal subunit protein uS15.